Reading from the N-terminus, the 312-residue chain is uncharacterized protein (312 aa).

It belongs to the asfivirus CP312R family.

It is found in the virion. This is an uncharacterized protein from African swine fever virus (strain Badajoz 1971 Vero-adapted) (Ba71V).